The sequence spans 706 residues: F-box/WD repeat-containing protein 7 (706 aa).

The interval 1–157 (MNQELLSVGS…IVDLPIHQRS (157 aa)) is disordered. Ser26 bears the Phosphoserine mark. Residues 32-54 (QMNRVLEEEQQQPRHQEEEHAAR) show a composition bias toward basic and acidic residues. The span at 69 to 83 (NDPQQGQLEENNNRF) shows a compositional bias: polar residues. Over residues 86 to 128 (VDEDSSGNQEEQEEDEEHAGEQDEEDEEEEEMDQESDDFDQSD) the composition is skewed to acidic residues. Over residues 129–138 (DSSREDEHTH) the composition is skewed to basic and acidic residues. The residue at position 204 (Thr204) is a Phosphothreonine. Phosphoserine is present on Ser226. The F-box domain occupies 277–323 (RDFISLLPKELALYVLSFLEPKDLLQAAQTCRYWRILAEDNLLWREK). WD repeat units follow at residues 377-417 (GHDD…RTLV), 419-455 (HTGG…CIHT), 458-497 (GHTS…HVLM), 499-535 (HVAA…CLHT), 538-577 (GHTN…HTLT), 579-617 (HQSL…QTLQ), and 621-658 (KHQS…FIRN).

As to quaternary structure, homodimer; homodimerization plays a role in substrate binding and/or ubiquitination and degradation. Component of the SCF(FBXW7) complex consisting of CUL1, RBX1, SKP1 and FBXW7. Interacts (via F-box domain) with SKP1. Interacts (via F-box domain) with pseudophosphatase STYX; the interaction is direct and prevents FBXW7 interaction with SKP1. Interacts with cyclin-E (CCNE1 or CCNE2). Interacts with PSEN1. Forms a trimeric complex with NOTCH1 and SGK1. Interacts with NOTCH1 intracellular domain/NICD and NOTCH4 intracellular domain/NICD. Interacts with NOTCH2 intracellular domain (N2ICD). Interacts with MYC (when phosphorylated). Interacts with USP28, counteracting ubiquitination of MYC. Interacts with JUN. Found in a complex with JUN and PRR7. Interacts with JUN and PRR7; the interaction inhibits ubiquitination-mediated JUN degradation, promoting its phosphorylation and transcriptional activity. Interacts (when phosphorylated at Thr-204) with PIN1, disrupting FBXW7 dimerization and promoting FBXW7 autoubiquitination and degradation. Interacts with UBE2QL1. Interacts with FAM83D; promotes FBXW7 degradation. Interacts with MYCN; FBXW7 competes with AURKA for binding to unphosphorylated MYCN but not for binding to phosphorylated MYCN. Interacts with STOML1. Interacts with NFE2L1. Interacts with USP36, counteracting ubiquitination of MYC. Interacts with RICTOR; mediates RICTOR ubiquitination and degradation.l Interacts with USP38, counteracting ubiquitination of MYC. (Microbial infection) In case of infection, interacts with T.annulata PIN1 (TaPIN1); leading to FBXW7 autoubiquitination and subsequent degradation: FBXW7 degradation promotes stabilization of JUN, which promotes cell transformation. Phosphorylation at Thr-204 promotes interaction with PIN1, leading to disrupt FBXW7 dimerization and promoting FBXW7 autoubiquitination and degradation. Phosphorylated by ATM at Ser-26 in response to DNA damage, promoting recruitment to DNA damage sites and 'Lys-63'-linked ubiquitination of phosphorylated XRCC4. In terms of processing, ubiquitinated: autoubiquitinates following phosphorylation at Thr-204 and subsequent interaction with PIN1. Ubiquitination leads to its degradation.

The protein localises to the nucleus. Its subcellular location is the nucleoplasm. It is found in the chromosome. The protein operates within protein modification; protein ubiquitination. Substrate recognition component of a SCF (SKP1-CUL1-F-box protein) E3 ubiquitin-protein ligase complex which mediates the ubiquitination and subsequent proteasomal degradation of target proteins. Recognizes and binds phosphorylated sites/phosphodegrons within target proteins and thereafter brings them to the SCF complex for ubiquitination. Identified substrates include cyclin-E (CCNE1 or CCNE2), DISC1, JUN, MYC, NOTCH1 released notch intracellular domain (NICD), NOTCH2, MCL1, MLST8, RICTOR, and probably PSEN1. Acts as a negative regulator of JNK signaling by binding to phosphorylated JUN and promoting its ubiquitination and subsequent degradation. SCF(FBXW7) complex mediates the ubiquitination and subsequent degradation of NFE2L1. Involved in bone homeostasis and negative regulation of osteoclast differentiation. Also able to promote 'Lys-63'-linked ubiquitination in response to DNA damage. The SCF(FBXW7) complex facilitates double-strand break repair following phosphorylation by ATM: phosphorylation promotes localization to sites of double-strand breaks and 'Lys-63'-linked ubiquitination of phosphorylated XRCC4, enhancing DNA non-homologous end joining. This chain is F-box/WD repeat-containing protein 7, found in Bos taurus (Bovine).